A 155-amino-acid polypeptide reads, in one-letter code: Photosystem I reaction center subunit XI (155 aa).

2 consecutive transmembrane segments (helical) span residues leucine 80 to phenylalanine 102 and glycine 117 to leucine 139.

Belongs to the PsaL family.

It localises to the cellular thylakoid membrane. The polypeptide is Photosystem I reaction center subunit XI (Thermosynechococcus vestitus (strain NIES-2133 / IAM M-273 / BP-1)).